Reading from the N-terminus, the 837-residue chain is Striatin-interacting protein 1 (837 aa).

An N-acetylmethionine modification is found at methionine 1. Disordered regions lie at residues 1–67 (MEPA…ESPD) and 333–423 (AASP…KGLP). Positions 18-35 (PQPPPPPPPATAQPPPGA) are enriched in pro residues. Over residues 47–60 (KAREFNRNQRKDSE) the composition is skewed to basic and acidic residues. Residues serine 59, serine 335, and serine 339 each carry the phosphoserine modification. The segment covering 356-377 (KALIKQDNLDAFNERDPYKADD) has biased composition (basic and acidic residues). The span at 378–391 (SREEEEENDDDSSL) shows a compositional bias: acidic residues. Serine 788 is modified (phosphoserine). A required for STRIPAK core complex formation region spans residues 796 to 837 (DNCLQSVLGQRVDLPEDFQMNYDLWLEREVFSKPISWEELLQ).

The protein belongs to the STRIP family. As to quaternary structure, part of the core of STRIPAK complexes composed of PP2A catalytic and scaffolding subunits, the striatins (PP2A regulatory subunits), the striatin-associated proteins MOB4, STRIP1 and STRIP2, PDCD10 and members of the STE20 kinases, such as STK24 and STK26. The STRIPAK complex can be extended by adapter proteins such as SLMAP:SIKE1, CTTNBP2 or CTTNBP2NL. Interacts with CDC42BPB. Interacts with CTTNBP2NL.

It is found in the cytoplasm. In terms of biological role, plays a role in the regulation of cell morphology and cytoskeletal organization. Required in the cortical actin filament dynamics and cell shape. Part of the striatin-interacting phosphatase and kinase (STRIPAK) complexes. STRIPAK complexes have critical roles in protein (de)phosphorylation and are regulators of multiple signaling pathways including Hippo, MAPK, nuclear receptor and cytoskeleton remodeling. Different types of STRIPAK complexes are involved in a variety of biological processes such as cell growth, differentiation, apoptosis, metabolism and immune regulation. In Mus musculus (Mouse), this protein is Striatin-interacting protein 1 (Strip1).